The sequence spans 210 residues: FMN-dependent NADH:quinone oxidoreductase (210 aa).

FMN is bound by residues 17–19 and 148–151; these read SCS and SSGG.

It belongs to the azoreductase type 1 family. As to quaternary structure, homodimer. Requires FMN as cofactor.

The catalysed reaction is 2 a quinone + NADH + H(+) = 2 a 1,4-benzosemiquinone + NAD(+). The enzyme catalyses N,N-dimethyl-1,4-phenylenediamine + anthranilate + 2 NAD(+) = 2-(4-dimethylaminophenyl)diazenylbenzoate + 2 NADH + 2 H(+). Functionally, quinone reductase that provides resistance to thiol-specific stress caused by electrophilic quinones. Its function is as follows. Also exhibits azoreductase activity. Catalyzes the reductive cleavage of the azo bond in aromatic azo compounds to the corresponding amines. The sequence is that of FMN-dependent NADH:quinone oxidoreductase from Geotalea uraniireducens (strain Rf4) (Geobacter uraniireducens).